The following is a 104-amino-acid chain: UPF0213 protein VIBHAR_05350 (104 aa).

The GIY-YIG domain maps to 7 to 82; the sequence is QRWSVYLIRN…KQLTKTKKEL (76 aa).

It belongs to the UPF0213 family.

This is UPF0213 protein VIBHAR_05350 from Vibrio campbellii (strain ATCC BAA-1116).